An 83-amino-acid chain; its full sequence is Cobrotoxin (83 aa).

An N-terminal signal peptide occupies residues 1 to 21; the sequence is MKTLLLTLLVVTIVCLDLGYT. 4 disulfides stabilise this stretch: cysteine 24–cysteine 45, cysteine 38–cysteine 62, cysteine 64–cysteine 75, and cysteine 76–cysteine 81.

It belongs to the three-finger toxin family. Short-chain subfamily. Type I alpha-neurotoxin sub-subfamily. In terms of tissue distribution, expressed by the venom gland.

It localises to the secreted. Binds to muscle nicotinic acetylcholine receptor (nAChR) and inhibit acetylcholine from binding to the receptor, thereby impairing neuromuscular transmission. Has a higher toxicity than cobrotoxin-b. In vivo, when tested on rat arthritis models, shows anti-inflammation and immunosuppression effects. This chain is Cobrotoxin, found in Naja atra (Chinese cobra).